We begin with the raw amino-acid sequence, 458 residues long: V-type ATP synthase beta chain (458 aa).

Belongs to the ATPase alpha/beta chains family.

Its function is as follows. Produces ATP from ADP in the presence of a proton gradient across the membrane. The V-type beta chain is a regulatory subunit. This Fusobacterium nucleatum subsp. nucleatum (strain ATCC 25586 / DSM 15643 / BCRC 10681 / CIP 101130 / JCM 8532 / KCTC 2640 / LMG 13131 / VPI 4355) protein is V-type ATP synthase beta chain.